Consider the following 738-residue polypeptide: DNA ligase (738 aa).

Residues 48–52 (DVVYD), 97–98 (SL), and glutamate 136 each bind NAD(+). The active-site N6-AMP-lysine intermediate is lysine 138. Residues arginine 159, glutamate 196, lysine 356, and lysine 380 each contribute to the NAD(+) site. Zn(2+) is bound by residues cysteine 474, cysteine 477, cysteine 492, and cysteine 497. Residues 659 to 738 (QLPQPLAGKT…SQLLELLEET (80 aa)) form the BRCT domain.

Belongs to the NAD-dependent DNA ligase family. LigA subfamily. It depends on Mg(2+) as a cofactor. Mn(2+) serves as cofactor.

It catalyses the reaction NAD(+) + (deoxyribonucleotide)n-3'-hydroxyl + 5'-phospho-(deoxyribonucleotide)m = (deoxyribonucleotide)n+m + AMP + beta-nicotinamide D-nucleotide.. In terms of biological role, DNA ligase that catalyzes the formation of phosphodiester linkages between 5'-phosphoryl and 3'-hydroxyl groups in double-stranded DNA using NAD as a coenzyme and as the energy source for the reaction. It is essential for DNA replication and repair of damaged DNA. In Cyanothece sp. (strain PCC 7425 / ATCC 29141), this protein is DNA ligase.